Consider the following 122-residue polypeptide: Small ribosomal subunit protein uS13 (122 aa).

A disordered region spans residues 91–122; the sequence is RHRRGLPVHGQRTKTNARTRKGPKRTVAGKKK.

It belongs to the universal ribosomal protein uS13 family. As to quaternary structure, part of the 30S ribosomal subunit. Forms a loose heterodimer with protein S19. Forms two bridges to the 50S subunit in the 70S ribosome.

Its function is as follows. Located at the top of the head of the 30S subunit, it contacts several helices of the 16S rRNA. In the 70S ribosome it contacts the 23S rRNA (bridge B1a) and protein L5 of the 50S subunit (bridge B1b), connecting the 2 subunits; these bridges are implicated in subunit movement. Contacts the tRNAs in the A and P-sites. This Kocuria rhizophila (strain ATCC 9341 / DSM 348 / NBRC 103217 / DC2201) protein is Small ribosomal subunit protein uS13.